Here is a 1088-residue protein sequence, read N- to C-terminus: ATP-dependent helicase/deoxyribonuclease subunit B (1088 aa).

Belongs to the helicase family. AddB/RexB type 2 subfamily. In terms of assembly, heterodimer of AddA and RexB. Mg(2+) serves as cofactor.

In terms of biological role, the heterodimer acts as both an ATP-dependent DNA helicase and an ATP-dependent, dual-direction single-stranded exonuclease. Recognizes the chi site generating a DNA molecule suitable for the initiation of homologous recombination. This subunit has 5' -&gt; 3' nuclease activity but not helicase activity. This Streptococcus suis (strain 98HAH33) protein is ATP-dependent helicase/deoxyribonuclease subunit B.